Reading from the N-terminus, the 340-residue chain is Uridine nucleosidase (340 aa).

His-254 is a catalytic residue.

This sequence belongs to the IUNH family.

Its subcellular location is the cytoplasm. The protein localises to the nucleus. The enzyme catalyses uridine + H2O = D-ribose + uracil. Also acts on cytidine. This Saccharomyces cerevisiae (strain ATCC 204508 / S288c) (Baker's yeast) protein is Uridine nucleosidase (URH1).